Here is a 116-residue protein sequence, read N- to C-terminus: uncharacterized protein (116 aa).

This is an uncharacterized protein from Acidianus filamentous virus 1 (isolate United States/Yellowstone) (AFV-1).